A 158-amino-acid polypeptide reads, in one-letter code: Cyclic pyranopterin monophosphate synthase (158 aa).

Residues 75–77 (LCH) and 113–114 (ME) contribute to the substrate site. Asp128 is an active-site residue.

It belongs to the MoaC family. Homohexamer; trimer of dimers.

It carries out the reaction (8S)-3',8-cyclo-7,8-dihydroguanosine 5'-triphosphate = cyclic pyranopterin phosphate + diphosphate. It participates in cofactor biosynthesis; molybdopterin biosynthesis. Catalyzes the conversion of (8S)-3',8-cyclo-7,8-dihydroguanosine 5'-triphosphate to cyclic pyranopterin monophosphate (cPMP). The protein is Cyclic pyranopterin monophosphate synthase of Ralstonia nicotianae (strain ATCC BAA-1114 / GMI1000) (Ralstonia solanacearum).